A 145-amino-acid chain; its full sequence is uncharacterized protein (145 aa).

Residues 97 to 117 traverse the membrane as a helical segment; the sequence is ISMLLLIVIIAIGLTISYMVI.

The protein resides in the membrane. This is an uncharacterized protein from Methanocaldococcus jannaschii (strain ATCC 43067 / DSM 2661 / JAL-1 / JCM 10045 / NBRC 100440) (Methanococcus jannaschii).